A 76-amino-acid chain; its full sequence is MCIKAEKYIEWVKHCQCHGVPLTTYKCPGCGEQIMTQCSPEKEIRDSLTCCPWCSAVFFKQVKGAKVKASAVIQNQ.

The protein localises to the host cytoplasm. This is an uncharacterized protein from Escherichia phage Mu (Bacteriophage Mu).